The sequence spans 118 residues: MKHRVGRVEQEIQREVNDILLKRVRDPRVEGVTITDINLSGDLQHVKVYYSILSNLASDAEKAQKGLDKAKGLIRSELGQRIKLYKIPEITFEQDGSVRYGEHIDELLRKLHQDEAQR.

It belongs to the RbfA family. As to quaternary structure, monomer. Binds 30S ribosomal subunits, but not 50S ribosomal subunits or 70S ribosomes.

It is found in the cytoplasm. One of several proteins that assist in the late maturation steps of the functional core of the 30S ribosomal subunit. Associates with free 30S ribosomal subunits (but not with 30S subunits that are part of 70S ribosomes or polysomes). Required for efficient processing of 16S rRNA. May interact with the 5'-terminal helix region of 16S rRNA. This Latilactobacillus sakei subsp. sakei (strain 23K) (Lactobacillus sakei subsp. sakei) protein is Ribosome-binding factor A.